Reading from the N-terminus, the 201-residue chain is CASP-like protein 2B2 (201 aa).

Topologically, residues Met-1–Arg-28 are cytoplasmic. Residues Val-29–Val-49 form a helical membrane-spanning segment. Over Ala-50–Lys-71 the chain is Extracellular. A helical transmembrane segment spans residues Ala-72–Val-92. The Cytoplasmic portion of the chain corresponds to Cys-93 to Pro-108. Residues Leu-109–Ala-129 form a helical membrane-spanning segment. The Extracellular portion of the chain corresponds to Ala-130 to Ala-166. The helical transmembrane segment at Ser-167–Phe-187 threads the bilayer. Topologically, residues Arg-188–Trp-201 are cytoplasmic.

The protein belongs to the Casparian strip membrane proteins (CASP) family. Homodimer and heterodimers.

The protein resides in the cell membrane. This is CASP-like protein 2B2 from Arabidopsis lyrata subsp. lyrata (Lyre-leaved rock-cress).